A 578-amino-acid polypeptide reads, in one-letter code: L-ascorbate oxidase (578 aa).

Residues 1–28 (MASLGFLFFFLLPLILLELSSSRSVMAA) form the signal peptide. 2 consecutive Plastocyanin-like domains span residues 30 to 149 (TRHF…LIVE) and 161 to 328 (DGEF…NYLP). 4 residues coordinate Cu cation: His-87, His-89, His-131, and His-133. 2 disulfides stabilise this stretch: Cys-108-Cys-565 and Cys-207-Cys-221. Residue Asn-206 is glycosylated (N-linked (GlcNAc...) asparagine). 4 N-linked (GlcNAc...) asparagine glycosylation sites follow: Asn-349, Asn-394, Asn-438, and Asn-451. The Plastocyanin-like 3 domain maps to 372–550 (HRRIILLNTQ…HMGMGVIFAE (179 aa)). Cu cation is bound by residues His-472, His-475, His-477, His-533, Cys-534, His-535, His-539, and Met-544.

This sequence belongs to the multicopper oxidase family. Dimer. The cofactor is Cu cation. Highly expressed in young and growing tissues.

It is found in the secreted. It catalyses the reaction 4 L-ascorbate + O2 = 4 monodehydro-L-ascorbate radical + 2 H2O. In terms of biological role, may be involved in a redox system involving ascorbic acid. This is L-ascorbate oxidase (AAO) from Nicotiana tabacum (Common tobacco).